Reading from the N-terminus, the 37-residue chain is VGIPVSCKHSGQCIKPCKDAGMRFGKCMNRKCDCTPK.

3 cysteine pairs are disulfide-bonded: cysteine 7–cysteine 27, cysteine 13–cysteine 32, and cysteine 17–cysteine 34. An interaction with Ca(2+)-activated K(+) channels region spans residues 25 to 32 (GKCMNRKC).

The protein belongs to the short scorpion toxin superfamily. Potassium channel inhibitor family. Alpha-KTx 03 subfamily. As to expression, expressed by the venom gland.

Its subcellular location is the secreted. Functionally, binds and inhibits potassium channels. Intracerebroventricular injection into mice induces paralyzing symptoms followed by death. Its binding affinity to rat brain synaptosomes is 5-fold lower than this of KTX 1. The protein is Potassium channel toxin alpha-KTx 3.9 (KTX3) of Buthus occitanus tunetanus (Common European scorpion).